The sequence spans 465 residues: L-seryl-tRNA(Sec) selenium transferase (465 aa).

The residue at position 294 (K294) is an N6-(pyridoxal phosphate)lysine.

Belongs to the SelA family. Pyridoxal 5'-phosphate serves as cofactor.

It localises to the cytoplasm. It carries out the reaction L-seryl-tRNA(Sec) + selenophosphate + H(+) = L-selenocysteinyl-tRNA(Sec) + phosphate. Its pathway is aminoacyl-tRNA biosynthesis; selenocysteinyl-tRNA(Sec) biosynthesis; selenocysteinyl-tRNA(Sec) from L-seryl-tRNA(Sec) (bacterial route): step 1/1. In terms of biological role, converts seryl-tRNA(Sec) to selenocysteinyl-tRNA(Sec) required for selenoprotein biosynthesis. This Mannheimia succiniciproducens (strain KCTC 0769BP / MBEL55E) protein is L-seryl-tRNA(Sec) selenium transferase.